The primary structure comprises 234 residues: Synaptogyrin-1 (234 aa).

Met-1 carries the post-translational modification N-acetylmethionine. At 1–23 (MEGGAYGAGKAGGAFDPYTLVRQ) the chain is on the cytoplasmic side. In terms of domain architecture, MARVEL spans 20-173 (LVRQPHTILR…QAVLAFQRYQ (154 aa)). Residues 24–44 (PHTILRVVSWVFSIVVFGSIV) traverse the membrane as a helical segment. The Lumenal portion of the chain corresponds to 45–71 (NEGYLNNPEEEEEFCIYNRNPNACSYG). The helical transmembrane segment at 72-92 (VTVGVLAFLTCLVYLALDVYF) threads the bilayer. At 93–104 (PQISSVKDRKKA) the chain is on the cytoplasmic side. A helical transmembrane segment spans residues 105 to 125 (VLSDIGVSAFWAFFWFVGFCF). The Lumenal portion of the chain corresponds to 126 to 148 (LANQWQVSKPKDNPLNEGTDAAR). Residues 149–169 (AAIAFSFFSIFTWAGQAVLAF) traverse the membrane as a helical segment. Topologically, residues 170–234 (QRYQIGADSA…EPQGYQSQGY (65 aa)) are cytoplasmic. The segment at 201–234 (EPSAGSDPTGMGGTYQHPANAFDAEPQGYQSQGY) is disordered.

The protein belongs to the synaptogyrin family. In terms of tissue distribution, nervous system (at protein level).

It localises to the cytoplasmic vesicle. The protein resides in the secretory vesicle. The protein localises to the synaptic vesicle membrane. Its subcellular location is the melanosome. In terms of biological role, may play a role in regulated exocytosis. Modulates the localization of synaptophysin/SYP into synaptic-like microvesicles and may therefore play a role in synaptic-like microvesicle formation and/or maturation. Involved in the regulation of short-term and long-term synaptic plasticity. In Rattus norvegicus (Rat), this protein is Synaptogyrin-1.